We begin with the raw amino-acid sequence, 585 residues long: Switch-associated protein 70 (585 aa).

In terms of domain architecture, PH spans 210–306 (DVLKQGYMIK…WIQAIHSTIH (97 aa)). Positions 316–532 (HKEARQRRKE…KLEMAAKMTK (217 aa)) form a coiled coil.

In terms of assembly, the SWAP complex consists of NPM1, NCL, PARP1 and SWAP70. Tyrosine-phosphorylated.

Its subcellular location is the cytoplasm. It localises to the cell membrane. The protein localises to the nucleus. It is found in the cell projection. The protein resides in the lamellipodium. In terms of biological role, phosphatidylinositol 3,4,5-trisphosphate-dependent guanine nucleotide exchange factor (GEF) which, independently of RAS, transduces signals from tyrosine kinase receptors to RAC. It also mediates signaling of membrane ruffling. Regulates the actin cytoskeleton as an effector or adapter protein in response to agonist stimulated phosphatidylinositol (3,4)-bisphosphate production and cell protrusion. This Bos taurus (Bovine) protein is Switch-associated protein 70 (SWAP70).